The following is a 378-amino-acid chain: Chaperone protein DnaJ (378 aa).

Positions 3–67 (DYYDLLGVSK…QTRGRYDQFG (65 aa)) constitute a J domain. The CR-type zinc finger occupies 133–215 (GQEREIKIPH…CAGQGVRQVR (83 aa)). Positions 146, 149, 163, 166, 189, 192, 203, and 206 each coordinate Zn(2+). CXXCXGXG motif repeat units follow at residues 146–153 (CDTCNGTG), 163–170 (CSTCGGVG), 189–196 (CPSCEGTG), and 203–210 (CPACAGQG).

It belongs to the DnaJ family. As to quaternary structure, homodimer. It depends on Zn(2+) as a cofactor.

It is found in the cytoplasm. Participates actively in the response to hyperosmotic and heat shock by preventing the aggregation of stress-denatured proteins and by disaggregating proteins, also in an autonomous, DnaK-independent fashion. Unfolded proteins bind initially to DnaJ; upon interaction with the DnaJ-bound protein, DnaK hydrolyzes its bound ATP, resulting in the formation of a stable complex. GrpE releases ADP from DnaK; ATP binding to DnaK triggers the release of the substrate protein, thus completing the reaction cycle. Several rounds of ATP-dependent interactions between DnaJ, DnaK and GrpE are required for fully efficient folding. Also involved, together with DnaK and GrpE, in the DNA replication of plasmids through activation of initiation proteins. The polypeptide is Chaperone protein DnaJ (Prochlorococcus marinus (strain MIT 9313)).